The sequence spans 230 residues: CDP-diacylglycerol--inositol 3-phosphatidyltransferase (230 aa).

Topologically, residues 1 to 28 (MPSAKSSDLSPTKTNLESTTKQKVSVQD) are cytoplasmic. The helical transmembrane segment at 29–51 (IFLYIPNLIGYLRIITAIISFLC) threads the bilayer. Over 52-57 (MANHPV) the chain is Lumenal. The chain crosses the membrane as a helical span at residues 58–77 (ATLIFYGISGFLDAFDGYAA). Residues D70 and D73 each coordinate Mg(2+). Positions 74, 78, and 84 each coordinate a CDP-1,2-diacyl-sn-glycerol. The Cytoplasmic portion of the chain corresponds to 78-89 (RKFNQGTRFGAV). A helical transmembrane segment spans residues 90–110 (LDMVTDRCATSSLIVYLGVLY). Residues D91 and D95 each coordinate Mg(2+). The active-site Proton acceptor is the D95. At 111-112 (PQ) the chain is on the lumenal side. Residues 113-133 (YTVFWQILVSLDLSSHYMHMY) traverse the membrane as a helical segment. Over 134–161 (AMLSAGSTSHKNVDETQSKLLSLYYNNR) the chain is Cytoplasmic. Residues 162-182 (LVLFFVCLINELFYMAVYLHY) form a helical membrane-spanning segment. Residues 183-184 (YK) are Lumenal-facing. The chain crosses the membrane as a helical span at residues 185–205 (FFWLGTVMLVASTPIWLFKQI). The Cytoplasmic portion of the chain corresponds to 206–230 (ANIIQLKNASLILARMDAHDHSKRD).

It belongs to the CDP-alcohol phosphatidyltransferase class-I family. Requires Mn(2+) as cofactor. It depends on Mg(2+) as a cofactor.

It localises to the endoplasmic reticulum membrane. It catalyses the reaction a CDP-1,2-diacyl-sn-glycerol + myo-inositol = a 1,2-diacyl-sn-glycero-3-phospho-(1D-myo-inositol) + CMP + H(+). With respect to regulation, inhibited by calcium and zinc ions. Inhibited by nucleoside triphosphates and diphosphates. In terms of biological role, catalyzes the synthesis of phosphatidylinositol (PtdIns). Required for proper membrane dynamics and cell wall integrity. In Candida albicans (strain SC5314 / ATCC MYA-2876) (Yeast), this protein is CDP-diacylglycerol--inositol 3-phosphatidyltransferase.